Here is a 180-residue protein sequence, read N- to C-terminus: Adenine phosphoribosyltransferase (180 aa).

Belongs to the purine/pyrimidine phosphoribosyltransferase family. As to quaternary structure, homodimer.

It is found in the cytoplasm. It catalyses the reaction AMP + diphosphate = 5-phospho-alpha-D-ribose 1-diphosphate + adenine. Its pathway is purine metabolism; AMP biosynthesis via salvage pathway; AMP from adenine: step 1/1. Catalyzes a salvage reaction resulting in the formation of AMP, that is energically less costly than de novo synthesis. This Marinomonas sp. (strain MWYL1) protein is Adenine phosphoribosyltransferase.